The sequence spans 333 residues: Biotin synthase (333 aa).

A Radical SAM core domain is found at 40–269 (YRVQLASLLS…HARVRLSAGR (230 aa)). Residues cysteine 55, cysteine 59, and cysteine 62 each coordinate [4Fe-4S] cluster. 4 residues coordinate [2Fe-2S] cluster: cysteine 100, cysteine 132, cysteine 192, and arginine 264.

It belongs to the radical SAM superfamily. Biotin synthase family. As to quaternary structure, homodimer. The cofactor is [4Fe-4S] cluster. It depends on [2Fe-2S] cluster as a cofactor.

It catalyses the reaction (4R,5S)-dethiobiotin + (sulfur carrier)-SH + 2 reduced [2Fe-2S]-[ferredoxin] + 2 S-adenosyl-L-methionine = (sulfur carrier)-H + biotin + 2 5'-deoxyadenosine + 2 L-methionine + 2 oxidized [2Fe-2S]-[ferredoxin]. The protein operates within cofactor biosynthesis; biotin biosynthesis; biotin from 7,8-diaminononanoate: step 2/2. Functionally, catalyzes the conversion of dethiobiotin (DTB) to biotin by the insertion of a sulfur atom into dethiobiotin via a radical-based mechanism. The chain is Biotin synthase from Synechococcus sp. (strain CC9902).